A 378-amino-acid polypeptide reads, in one-letter code: Acetylornithine deacetylase (378 aa).

His-76 lines the Zn(2+) pocket. Residue Asp-78 is part of the active site. Asp-108 serves as a coordination point for Zn(2+). Glu-140 is a catalytic residue. Residues Glu-141, Glu-165, and His-351 each coordinate Zn(2+).

It belongs to the peptidase M20A family. ArgE subfamily. Homodimer. Zn(2+) serves as cofactor. The cofactor is Co(2+). It depends on glutathione as a cofactor.

It is found in the cytoplasm. It catalyses the reaction N(2)-acetyl-L-ornithine + H2O = L-ornithine + acetate. It participates in amino-acid biosynthesis; L-arginine biosynthesis; L-ornithine from N(2)-acetyl-L-ornithine (linear): step 1/1. Catalyzes the hydrolysis of the amide bond of N(2)-acetylated L-amino acids. Cleaves the acetyl group from N-acetyl-L-ornithine to form L-ornithine, an intermediate in L-arginine biosynthesis pathway, and a branchpoint in the synthesis of polyamines. The chain is Acetylornithine deacetylase from Aliivibrio fischeri (strain MJ11) (Vibrio fischeri).